Consider the following 548-residue polypeptide: Esterase-5A (548 aa).

A signal peptide spans 1-19 (MHLVRWLICLIQLWIQLGA). Cysteines 87 and 106 form a disulfide. N-linked (GlcNAc...) asparagine glycosylation is found at Asn95 and Asn116. Ser210 (acyl-ester intermediate) is an active-site residue. A disulfide bond links Cys262 and Cys274. Residue Asn479 is glycosylated (N-linked (GlcNAc...) asparagine). Cys518 and Cys539 are disulfide-bonded.

This sequence belongs to the type-B carboxylesterase/lipase family.

The protein resides in the secreted. It catalyses the reaction a carboxylic ester + H2O = an alcohol + a carboxylate + H(+). The sequence is that of Esterase-5A (Est-5A) from Drosophila persimilis (Fruit fly).